A 331-amino-acid chain; its full sequence is Protein RecA (331 aa).

ATP is bound at residue 67–74 (GPESSGKT).

The protein belongs to the RecA family.

Its subcellular location is the cytoplasm. Its function is as follows. Can catalyze the hydrolysis of ATP in the presence of single-stranded DNA, the ATP-dependent uptake of single-stranded DNA by duplex DNA, and the ATP-dependent hybridization of homologous single-stranded DNAs. It interacts with LexA causing its activation and leading to its autocatalytic cleavage. This is Protein RecA from Wigglesworthia glossinidia brevipalpis.